We begin with the raw amino-acid sequence, 387 residues long: Aminodeoxyfutalosine synthase (387 aa).

The 228-residue stretch at 52–279 folds into the Radical SAM core domain; it reads VHFNVNRHLN…ARTQMATGAE (228 aa). Residues C66, C70, and C73 each contribute to the [4Fe-4S] cluster site.

It belongs to the radical SAM superfamily. MqnE family. [4Fe-4S] cluster serves as cofactor.

The enzyme catalyses 3-[(1-carboxyvinyl)-oxy]benzoate + S-adenosyl-L-methionine + H2O = 6-amino-6-deoxyfutalosine + hydrogencarbonate + L-methionine + H(+). It functions in the pathway quinol/quinone metabolism; menaquinone biosynthesis. In terms of biological role, radical SAM enzyme that catalyzes the addition of the adenosyl radical to the double bond of 3-[(1-carboxyvinyl)oxy]benzoate, leading to aminodeoxyfutalosine (AFL), a key intermediate in the formation of menaquinone (MK, vitamin K2) from chorismate. The chain is Aminodeoxyfutalosine synthase from Streptomyces coelicolor (strain ATCC BAA-471 / A3(2) / M145).